Reading from the N-terminus, the 1050-residue chain is Probable E3 ubiquitin-protein ligase HERC3 (1050 aa).

RCC1 repeat units follow at residues 1–51, 52–101, 102–154, 156–207, 208–259, 261–311, and 313–366; these read MLCW…FLLE, DGEV…ALSD, RGQL…ALAA, GQFF…ALSL, SGAV…VLTK, GGVF…AFVP, and SGLI…IVKQ. The region spanning 951–1050 is the HECT domain; the sequence is YKGDYSATHP…LDNYEGFSLA (100 aa). The active-site Glycyl thioester intermediate is the Cys-1018.

Post-translationally, ubiquitinated; which promotes degradation by the proteasome.

The protein localises to the cytoplasm. It is found in the cytoplasmic vesicle. It catalyses the reaction S-ubiquitinyl-[E2 ubiquitin-conjugating enzyme]-L-cysteine + [acceptor protein]-L-lysine = [E2 ubiquitin-conjugating enzyme]-L-cysteine + N(6)-ubiquitinyl-[acceptor protein]-L-lysine.. It participates in protein modification; protein ubiquitination. Functionally, E3 ubiquitin-protein ligase which accepts ubiquitin from an E2 ubiquitin-conjugating enzyme in the form of a thioester and then directly transfers the ubiquitin to targeted substrates. This chain is Probable E3 ubiquitin-protein ligase HERC3 (HERC3), found in Homo sapiens (Human).